The following is a 194-amino-acid chain: H-N-H endonuclease F-TflI (194 aa).

In terms of biological role, endonuclease that cleaves only one strand of asymmetric DNA substrates thereby introducing interruptions into the template or coding strand. The protein is H-N-H endonuclease F-TflI of Escherichia coli (Enterobacteria phage T5).